The following is a 149-amino-acid chain: MEIILLDRVHGLGSLGDKVRVKSGYARNYLIPNGKATEAIPSKIAEFEARRKELEEKQAQRLAASAQRAESLNGKILTVFAKAGDEGKLFGSVGTQQIVAAAEQQGLQLERQEVMMPHGTIRELGEYVVDLKLYGDIEAQVTVRVVVAE.

It belongs to the bacterial ribosomal protein bL9 family.

Its function is as follows. Binds to the 23S rRNA. The protein is Large ribosomal subunit protein bL9 of Dichelobacter nodosus (strain VCS1703A).